Here is a 370-residue protein sequence, read N- to C-terminus: Phosphoserine aminotransferase (370 aa).

Arg38 contacts L-glutamate. Residues Trp101, Thr143, Asp166, and Gln189 each coordinate pyridoxal 5'-phosphate. Lys190 is modified (N6-(pyridoxal phosphate)lysine). Asn243 to Thr244 provides a ligand contact to pyridoxal 5'-phosphate.

The protein belongs to the class-V pyridoxal-phosphate-dependent aminotransferase family. SerC subfamily. In terms of assembly, homodimer. The cofactor is pyridoxal 5'-phosphate.

It localises to the cytoplasm. The enzyme catalyses O-phospho-L-serine + 2-oxoglutarate = 3-phosphooxypyruvate + L-glutamate. It carries out the reaction 4-(phosphooxy)-L-threonine + 2-oxoglutarate = (R)-3-hydroxy-2-oxo-4-phosphooxybutanoate + L-glutamate. Its pathway is amino-acid biosynthesis; L-serine biosynthesis; L-serine from 3-phospho-D-glycerate: step 2/3. It participates in cofactor biosynthesis; pyridoxine 5'-phosphate biosynthesis; pyridoxine 5'-phosphate from D-erythrose 4-phosphate: step 3/5. In terms of biological role, catalyzes the reversible conversion of 3-phosphohydroxypyruvate to phosphoserine and of 3-hydroxy-2-oxo-4-phosphonooxybutanoate to phosphohydroxythreonine. This is Phosphoserine aminotransferase from Methanosarcina mazei (strain ATCC BAA-159 / DSM 3647 / Goe1 / Go1 / JCM 11833 / OCM 88) (Methanosarcina frisia).